We begin with the raw amino-acid sequence, 1646 residues long: Monensin-resistant homolog 2 (1646 aa).

It belongs to the MON2 family.

The protein resides in the golgi apparatus. In terms of biological role, may be required for traffic between late Golgi and early endosomes. This is Monensin-resistant homolog 2 (mon-2) from Caenorhabditis elegans.